The primary structure comprises 445 residues: RNA-binding protein asd-2 (445 aa).

Residues Thr22–Ser63 are disordered. Residues Pro42 to Ser63 show a composition bias toward polar residues. The interval Glu71–Thr128 is qua1 domain. In terms of domain architecture, KH spans Asn145–Val171. The tract at residues Ala230–Arg253 is qua2 domain; involved in RNA binding.

As to quaternary structure, interacts with sup-12; in the presence of RNA, but with weak affinity in the absence of RNA. As to expression, isoform b: Expressed in the hypodermis and pharyngeal muscles. Isoform c: Expressed in body wall muscles and phayngeal muscles.

It localises to the nucleus. Its function is as follows. RNA-binding protein that binds to the 5'-NACUAAY-N(1,20)-UAAY-3' consensus sequence in pre-mRNA introns to promote alternative splicing. Required for mutually exclusive alternative splicing where it modulates the switch between mutually exclusive exons during pre-mRNA maturation. Involved in muscle-specific gene expression regulating the alternative splicing of genes such as let-2 and unc-60 to ensure that their respective isoforms are expressed in muscle. Promotes the removal of intron 10 from let-2 pre-mRNA to allow for the exclusive expression of the muscle-specific let-2 isoform (as opposed to the non-muscle-specific isoform expressed in embryos) in body wall muscles during late larval and adult stages of development. Binds cooperatively with RNA-binding protein sup-12 to intron 1A of the unc-60 pre-mRNA to promote alternative splicing and expression of the muscle specific isoform of unc-60. This is RNA-binding protein asd-2 from Caenorhabditis elegans.